The primary structure comprises 320 residues: tRNA N6-adenosine threonylcarbamoyltransferase (320 aa).

Residues His113 and His117 each contribute to the Fe cation site. Substrate is bound by residues 143 to 147, Asp176, Gly189, Asp193, and Asn281; that span reads VVSGG. Asp305 contacts Fe cation.

It belongs to the KAE1 / TsaD family. Fe(2+) serves as cofactor.

It localises to the cytoplasm. It catalyses the reaction L-threonylcarbamoyladenylate + adenosine(37) in tRNA = N(6)-L-threonylcarbamoyladenosine(37) in tRNA + AMP + H(+). Functionally, required for the formation of a threonylcarbamoyl group on adenosine at position 37 (t(6)A37) in tRNAs that read codons beginning with adenine. Is involved in the transfer of the threonylcarbamoyl moiety of threonylcarbamoyl-AMP (TC-AMP) to the N6 group of A37, together with TsaE and TsaB. TsaD likely plays a direct catalytic role in this reaction. The polypeptide is tRNA N6-adenosine threonylcarbamoyltransferase (Mycoplasmoides gallisepticum (strain R(low / passage 15 / clone 2)) (Mycoplasma gallisepticum)).